The following is a 464-amino-acid chain: Cytochrome P450 85A1 (464 aa).

Residues A2–L22 form a helical membrane-spanning segment. C414 is a binding site for heme.

This sequence belongs to the cytochrome P450 family. Requires heme as cofactor. As to expression, expressed in sub-meristematic regions of shoot and root apexes, in zones undergoing lateral root formation, in fruits, and in all flower parts, with a high expression in young flower buds and at the joint in the pedicel.

The protein localises to the membrane. It carries out the reaction 6-deoxocastasterone + reduced [NADPH--hemoprotein reductase] + O2 = 6alpha-hydroxycastasterone + oxidized [NADPH--hemoprotein reductase] + H2O + H(+). The enzyme catalyses 6alpha-hydroxycastasterone + reduced [NADPH--hemoprotein reductase] + O2 = castasterone + oxidized [NADPH--hemoprotein reductase] + 2 H2O + H(+). The catalysed reaction is 6-deoxocastasterone + 2 reduced [NADPH--hemoprotein reductase] + 2 O2 = castasterone + 2 oxidized [NADPH--hemoprotein reductase] + 3 H2O + 2 H(+). It functions in the pathway plant hormone biosynthesis; brassinosteroid biosynthesis. Functionally, catalyzes the C6-oxidation step in brassinosteroids biosynthesis. Converts 6-deoxocastasterone (6-deoxoCS) to castasterone (CS). May also convert 6-deoxoteasterone (6-deoxoTE) to teasterone (TE), 3-dehydro-6-deoxoteasterone (6-deoxo3DT, 6-deoxo3DHT) to 3-dehydroteasterone (3DT, 3-DHT), and 6-deoxotyphasterol (6-deoxoTY) to typhasterol (TY), but not castasterone (CS) to brassinolide (BL). This Solanum lycopersicum (Tomato) protein is Cytochrome P450 85A1.